A 320-amino-acid chain; its full sequence is Protein U25 (320 aa).

Belongs to the herpesviridae US22 family.

In Human herpesvirus 7 (strain JI) (HHV-7), this protein is Protein U25 (U25).